The following is a 461-amino-acid chain: Putative cytochrome P450 132 (461 aa).

Residue cysteine 409 participates in heme binding.

Belongs to the cytochrome P450 family. The cofactor is heme.

The protein is Putative cytochrome P450 132 (cyp132) of Mycobacterium tuberculosis (strain ATCC 25618 / H37Rv).